Consider the following 921-residue polypeptide: Isoleucine--tRNA ligase 1 (921 aa).

Positions 57 to 67 match the 'HIGH' region motif; that stretch reads PYANGDIHMGH. E552 contributes to the L-isoleucyl-5'-AMP binding site. The 'KMSKS' region signature appears at 593–597; that stretch reads KMSKS. Position 596 (K596) interacts with ATP. Residues C888, C891, C908, and C911 each coordinate Zn(2+).

It belongs to the class-I aminoacyl-tRNA synthetase family. IleS type 1 subfamily. In terms of assembly, monomer. It depends on Zn(2+) as a cofactor.

It is found in the cytoplasm. The catalysed reaction is tRNA(Ile) + L-isoleucine + ATP = L-isoleucyl-tRNA(Ile) + AMP + diphosphate. Catalyzes the attachment of isoleucine to tRNA(Ile). As IleRS can inadvertently accommodate and process structurally similar amino acids such as valine, to avoid such errors it has two additional distinct tRNA(Ile)-dependent editing activities. One activity is designated as 'pretransfer' editing and involves the hydrolysis of activated Val-AMP. The other activity is designated 'posttransfer' editing and involves deacylation of mischarged Val-tRNA(Ile). The sequence is that of Isoleucine--tRNA ligase 1 from Bacillus cereus (strain ATCC 10987 / NRS 248).